A 290-amino-acid chain; its full sequence is MKIAVYGKGGIGKSTTSCNISIALARRGGKVLQIGCDPKHDSTFTLTGFLIPTIIDTLQSKDYHYEEIWPEDVIHKGYGGVDCVEAGGPPAGAGCGGYVVGETVKLLKELNAFYEYDIILFDVLGDVVCGGLAAPLNYADYCVIITDNGFDALFAANRIAVSIGEKTRTHLLRLAGLVGNRTSKRDLIDGYVEVCPMPVIEVLPLIEDIRISRVKGKTLFEMVGSEPSLNYVCEYYLNIADQILSQPEGIVPKEIPDRKFFSLLSDSYLSPINDGKQGKNQENLLGFTMV.

ATP is bound by residues Gly-10 to Thr-15 and Lys-39. Ser-14 is a Mg(2+) binding site. [4Fe-4S] cluster contacts are provided by Cys-95 and Cys-129. Asn-180 to Arg-181 provides a ligand contact to ATP.

This sequence belongs to the NifH/BchL/ChlL family. In terms of assembly, homodimer. Protochlorophyllide reductase is composed of three subunits; ChlL, ChlN and ChlB. It depends on [4Fe-4S] cluster as a cofactor.

It localises to the plastid. Its subcellular location is the chloroplast. It carries out the reaction chlorophyllide a + oxidized 2[4Fe-4S]-[ferredoxin] + 2 ADP + 2 phosphate = protochlorophyllide a + reduced 2[4Fe-4S]-[ferredoxin] + 2 ATP + 2 H2O. The protein operates within porphyrin-containing compound metabolism; chlorophyll biosynthesis (light-independent). Functionally, component of the dark-operative protochlorophyllide reductase (DPOR) that uses Mg-ATP and reduced ferredoxin to reduce ring D of protochlorophyllide (Pchlide) to form chlorophyllide a (Chlide). This reaction is light-independent. The L component serves as a unique electron donor to the NB-component of the complex, and binds Mg-ATP. The chain is Light-independent protochlorophyllide reductase iron-sulfur ATP-binding protein from Cycas taitungensis (Prince sago).